The sequence spans 1086 residues: DNA polymerase (1086 aa).

The segment at 638-657 (STTRKPVDDVEEHSECNGFT) is disordered.

This sequence belongs to the DNA polymerase type-B family.

The enzyme catalyses DNA(n) + a 2'-deoxyribonucleoside 5'-triphosphate = DNA(n+1) + diphosphate. Functionally, replicates the viral genome. Host DNA polymerases cannot substitute for the viral enzyme in this process. The chain is DNA polymerase from Noctuidae (owlet moths).